Here is a 739-residue protein sequence, read N- to C-terminus: NAD(P)H-quinone oxidoreductase subunit 5, chloroplastic (739 aa).

16 consecutive transmembrane segments (helical) span residues 9–29, 39–59, 89–109, 125–145, 147–167, 185–205, 219–239, 258–278, 280–300, 327–347, 354–374, 396–416, 425–445, 542–562, 610–630, and 719–739; these read WVIP…LFFI, IWAF…VQLS, IDPL…LVLI, FVYI…SNLI, IYFF…FWFT, GDFG…SLEF, NGIN…GAVA, TPIS…FLLA, LLPL…VGTI, LGYM…FHLI, ALLF…VGYS, STFL…CFWS, WLYS…TAFY, LFPL…GISF, SLAI…YSFF, and ISSY…FFLF.

It belongs to the complex I subunit 5 family. NDH is composed of at least 16 different subunits, 5 of which are encoded in the nucleus.

The protein resides in the plastid. Its subcellular location is the chloroplast thylakoid membrane. The catalysed reaction is a plastoquinone + NADH + (n+1) H(+)(in) = a plastoquinol + NAD(+) + n H(+)(out). It carries out the reaction a plastoquinone + NADPH + (n+1) H(+)(in) = a plastoquinol + NADP(+) + n H(+)(out). Its function is as follows. NDH shuttles electrons from NAD(P)H:plastoquinone, via FMN and iron-sulfur (Fe-S) centers, to quinones in the photosynthetic chain and possibly in a chloroplast respiratory chain. The immediate electron acceptor for the enzyme in this species is believed to be plastoquinone. Couples the redox reaction to proton translocation, and thus conserves the redox energy in a proton gradient. The polypeptide is NAD(P)H-quinone oxidoreductase subunit 5, chloroplastic (ndhF) (Agrostis stolonifera (Creeping bentgrass)).